The primary structure comprises 192 residues: Phosphoheptose isomerase (192 aa).

An SIS domain is found at 34 to 192 (VVDAYRAGNK…VERELFLKGN (159 aa)). Residue 49–51 (NGG) participates in substrate binding. Zn(2+)-binding residues include His-58 and Glu-62. Substrate contacts are provided by residues Glu-62, 91-92 (ND), 117-119 (STS), Ser-122, and Gln-169. Gln-169 and His-177 together coordinate Zn(2+).

This sequence belongs to the SIS family. GmhA subfamily. As to quaternary structure, homotetramer. Requires Zn(2+) as cofactor.

It localises to the cytoplasm. The catalysed reaction is 2 D-sedoheptulose 7-phosphate = D-glycero-alpha-D-manno-heptose 7-phosphate + D-glycero-beta-D-manno-heptose 7-phosphate. The protein operates within carbohydrate biosynthesis; D-glycero-D-manno-heptose 7-phosphate biosynthesis; D-glycero-alpha-D-manno-heptose 7-phosphate and D-glycero-beta-D-manno-heptose 7-phosphate from sedoheptulose 7-phosphate: step 1/1. Catalyzes the isomerization of sedoheptulose 7-phosphate in D-glycero-D-manno-heptose 7-phosphate. The protein is Phosphoheptose isomerase of Geobacter sp. (strain M21).